The following is a 414-amino-acid chain: COUP transcription factor 2 (414 aa).

The interval 1-72 (MAMVVSTWRD…PGGPGSDKQQ (72 aa)) is disordered. A compositionally biased stretch (pro residues) spans 27 to 37 (PPVPGPPPGAP). The segment covering 38–54 (HTPQTPGQGGPASTPAQ) has biased composition (low complexity). Phosphothreonine is present on T51. The segment at residues 76–151 (HIECVVCGDK…VGMRREAVQR (76 aa)) is a DNA-binding region (nuclear receptor). 2 consecutive NR C4-type zinc fingers follow at residues 79 to 99 (CVVCGDKSSGKHYGQFTCEGC) and 115 to 139 (CRANRNCPIDQHHRNQCQYCRLKKC). Residues 117–414 (ANRNCPIDQH…SFNWPYMAIQ (298 aa)) form an interaction with ZFPM2 region. The NR LBD domain occupies 177–403 (YLSGYISLLL…TLIRDMLLSG (227 aa)). Residues 337 to 414 (LQEKSQCALE…SFNWPYMAIQ (78 aa)) form an important for dimerization region.

Belongs to the nuclear hormone receptor family. NR2 subfamily. Interacts with SQSTM1. Binds DNA as a dimer; homodimer or heterodimer with NR2F6. Interacts with NCOA1, NCOA2, NCOA3 and PPARGC1A. Interacts with ZFPM2.

Its subcellular location is the nucleus. Ligand-activated transcription factor. Activated by high concentrations of 9-cis-retinoic acid and all-trans-retinoic acid, but not by dexamethasone, cortisol or progesterone (in vitro). Regulation of the apolipoprotein A-I gene transcription. Binds to DNA site A. May be required to establish ovary identity during early gonad development. The polypeptide is COUP transcription factor 2 (Nr2f2) (Rattus norvegicus (Rat)).